We begin with the raw amino-acid sequence, 98 residues long: Large ribosomal subunit protein bL27 (98 aa).

The propeptide occupies 1–9 (MLKMNLQLF).

This sequence belongs to the bacterial ribosomal protein bL27 family. Post-translationally, the N-terminus is cleaved by ribosomal processing cysteine protease Prp.

The polypeptide is Large ribosomal subunit protein bL27 (Desulfitobacterium hafniense (strain DSM 10664 / DCB-2)).